The sequence spans 101 residues: UPF0213 protein VC_A0739 (101 aa).

In terms of domain architecture, GIY-YIG spans 9–85; sequence SPWFVYLVRC…KALSKSQKEA (77 aa).

Belongs to the UPF0213 family.

The chain is UPF0213 protein VC_A0739 from Vibrio cholerae serotype O1 (strain ATCC 39315 / El Tor Inaba N16961).